The chain runs to 453 residues: MASVIEQCQVVPSPGSATELTLPLTYFDHVWLAFHRMRRILFYKLPISRPDFVQTIIPTLKDSLSLTLKYYLPLAGNVACPQDWSGYPELRYVTGNSVSVIFSESDMDFNYLIGYHPRNTKDFYHFVPQLAEPKDAPGVQLAPVLAIQVTLFPNHGISIGFTNHHVAGDGATIVKFVRAWALLNKFGGDEQFLANEFIPFYDRSVIKDPNGVGMSIWNEMKKYKHMMKMSDVVTPPDKVRGTFIITRHDIGKLKNLVLTRRPKLTHVTSFTVTCAYVWTCIIKSEAATGEEIDENGMEFFGCAADCRAQFNPPLPPSYFGNALVGYVARTRQVDLAGKEGFTIAVELIGEAIRKRMKDEEWILSGSWFKEYDKVDAKRSLSVAGSPKLDLYAADFGWGRPEKLEFVSIDNDDGISMSLSKSKDSDGDLEIGLSLSKTRMNAFAAMFTHGISFL.

The active-site Proton acceptor is H165. The HXXXD motif motif lies at 165-169 (HVAGD). Malonyl-CoA contacts are provided by residues K254, H266, and 268–269 (TS). D394 functions as the Proton acceptor in the catalytic mechanism. The DFGWG motif motif lies at 394–398 (DFGWG).

This sequence belongs to the plant acyltransferase family. Phenolic glucoside malonyltransferase subfamily. In terms of assembly, monomer. In terms of tissue distribution, highly expressed in flower. Also expressed in flower bud, stem, root and leaf.

The catalysed reaction is a flavonol 3-O-beta-D-glucoside + malonyl-CoA = a flavonol 3-O-(6-O-malonyl-beta-D-glucoside) + CoA. It catalyses the reaction a flavonol 7-O-beta-D-glucoside + malonyl-CoA = a flavonol 7-O-(6-O-malonyl-beta-D-glucoside) + CoA. Its function is as follows. Malonyltransferase with broad substrate specificity acting on phenolic glucosides including xenobiotic naphthols. Has activity against flavonoid 7-O-glucosides, flavonoid 3-O-glucosides and naphthol glucosides, and to a lesser extent against coumarin glucosides in vitro. Prefers malonyl-CoA as an acyl donor, but also active with succinyl-CoA and methylmalonyl-CoA, but not with acetyl-CoA. The polypeptide is Phenolic glucoside malonyltransferase 1 (Nicotiana tabacum (Common tobacco)).